The following is a 596-amino-acid chain: Elongation factor 4 (596 aa).

The 183-residue stretch at 2–184 (RNIRNFSIIA…AIVHRIPPPK (183 aa)) folds into the tr-type G domain. GTP-binding positions include 14–19 (DHGKST) and 131–134 (NKID).

This sequence belongs to the TRAFAC class translation factor GTPase superfamily. Classic translation factor GTPase family. LepA subfamily.

The protein localises to the cell inner membrane. The enzyme catalyses GTP + H2O = GDP + phosphate + H(+). Functionally, required for accurate and efficient protein synthesis under certain stress conditions. May act as a fidelity factor of the translation reaction, by catalyzing a one-codon backward translocation of tRNAs on improperly translocated ribosomes. Back-translocation proceeds from a post-translocation (POST) complex to a pre-translocation (PRE) complex, thus giving elongation factor G a second chance to translocate the tRNAs correctly. Binds to ribosomes in a GTP-dependent manner. The sequence is that of Elongation factor 4 from Xanthomonas euvesicatoria pv. vesicatoria (strain 85-10) (Xanthomonas campestris pv. vesicatoria).